Reading from the N-terminus, the 361-residue chain is Neuronal-specific septin-3 (361 aa).

The tract at residues 1–46 (MSEIVPPEVRPKPAVPAKPSHVAPPSSAPFVPSPQGTGGEGQGSGR) is disordered. A compositionally biased stretch (low complexity) spans 15-34 (VPAKPSHVAPPSSAPFVPSP). Residues 36 to 46 (GTGGEGQGSGR) show a composition bias toward gly residues. A Septin-type G domain is found at 70-342 (AGFDFNIMVV…ETYRAKRLND (273 aa)). Residues 80 to 87 (GQSGLGKS) are G1 motif. Residues 80–87 (GQSGLGKS) and Thr114 each bind GTP. Residues 137 to 140 (DTPG) are G3 motif. Residues 219–222 (AKSD) form a G4 motif region. Residues 220-228 (KSDTLTPEE), Gly276, and Arg291 contribute to the GTP site. Residues 341-361 (NDNGGLHPISSSGHDTQESNL) are disordered. Residues 349-361 (ISSSGHDTQESNL) show a composition bias toward polar residues.

This sequence belongs to the TRAFAC class TrmE-Era-EngA-EngB-Septin-like GTPase superfamily. Septin GTPase family.

Its subcellular location is the cytoplasm. Its function is as follows. May be involved in cytokinesis. This Danio rerio (Zebrafish) protein is Neuronal-specific septin-3.